The primary structure comprises 31 residues: Photosystem II reaction center protein T (31 aa).

A helical membrane pass occupies residues 3–23 (AFSYTLLMALAAVTLFFAVAF).

Belongs to the PsbT family. As to quaternary structure, PSII is composed of 1 copy each of membrane proteins PsbA, PsbB, PsbC, PsbD, PsbE, PsbF, PsbH, PsbI, PsbJ, PsbK, PsbL, PsbM, PsbT, PsbX, PsbY, Psb30/Ycf12, peripheral proteins PsbO, CyanoQ (PsbQ), PsbU, PsbV and a large number of cofactors. It forms dimeric complexes.

It is found in the cellular thylakoid membrane. Its function is as follows. Found at the monomer-monomer interface of the photosystem II (PS II) dimer, plays a role in assembly and dimerization of PSII. PSII is a light-driven water plastoquinone oxidoreductase, using light energy to abstract electrons from H(2)O, generating a proton gradient subsequently used for ATP formation. The sequence is that of Photosystem II reaction center protein T from Prochlorococcus marinus (strain MIT 9211).